Consider the following 133-residue polypeptide: Cytochrome c-554 (133 aa).

Glutamine 1 bears the Pyrrolidone carboxylic acid mark. Heme c-binding residues include methionine 17, cysteine 122, cysteine 125, and histidine 126.

In terms of processing, binds 1 heme c group covalently per subunit.

It is found in the periplasm. Its function is as follows. Monoheme c-type cytochrome, that is particularly expressed when cells generate energy via aerobic respiration. This chain is Cytochrome c-554 (cycF), found in Cereibacter sphaeroides (Rhodobacter sphaeroides).